The chain runs to 370 residues: Chaperone protein DnaJ (370 aa).

Residues 6 to 70 (DYYEVLGVQR…EKRSMYDRFG (65 aa)) enclose the J domain. The CR-type zinc finger occupies 128-208 (GVEKTIEFRR…CRGEGRVRQT (81 aa)). The Zn(2+) site is built by Cys141, Cys144, Cys158, Cys161, Cys182, Cys185, Cys196, and Cys199. CXXCXGXG motif repeat units lie at residues 141–148 (CPACRGSG), 158–165 (CPKCGGLG), 182–189 (CDMCRGEG), and 196–203 (CRECRGEG).

It belongs to the DnaJ family. Homodimer. Zn(2+) is required as a cofactor.

The protein localises to the cytoplasm. Functionally, participates actively in the response to hyperosmotic and heat shock by preventing the aggregation of stress-denatured proteins and by disaggregating proteins, also in an autonomous, DnaK-independent fashion. Unfolded proteins bind initially to DnaJ; upon interaction with the DnaJ-bound protein, DnaK hydrolyzes its bound ATP, resulting in the formation of a stable complex. GrpE releases ADP from DnaK; ATP binding to DnaK triggers the release of the substrate protein, thus completing the reaction cycle. Several rounds of ATP-dependent interactions between DnaJ, DnaK and GrpE are required for fully efficient folding. Also involved, together with DnaK and GrpE, in the DNA replication of plasmids through activation of initiation proteins. The chain is Chaperone protein DnaJ from Roseiflexus sp. (strain RS-1).